Consider the following 552-residue polypeptide: Glucose-6-phosphate isomerase (552 aa).

Residue Glu357 is the Proton donor of the active site. Residues His388 and Lys516 contribute to the active site. Residues 525-552 (ELASTKPPKHDSSTNALIERYRTRGCRS) form a disordered region.

This sequence belongs to the GPI family.

The protein localises to the cytoplasm. The catalysed reaction is alpha-D-glucose 6-phosphate = beta-D-fructose 6-phosphate. It participates in carbohydrate biosynthesis; gluconeogenesis. It functions in the pathway carbohydrate degradation; glycolysis; D-glyceraldehyde 3-phosphate and glycerone phosphate from D-glucose: step 2/4. Catalyzes the reversible isomerization of glucose-6-phosphate to fructose-6-phosphate. The sequence is that of Glucose-6-phosphate isomerase from Laribacter hongkongensis (strain HLHK9).